Here is a 507-residue protein sequence, read N- to C-terminus: Mitochondrial antiviral-signaling protein (507 aa).

At 1–482 (MTFAEEKTYK…PCASSVSWAK (482 aa)) the chain is on the cytoplasmic side. Glycyl lysine isopeptide (Lys-Gly) (interchain with G-Cter in ubiquitin) cross-links involve residues lysine 7 and lysine 10. Residues 10–77 (KYIRYNHSKF…WVEVFIRALR (68 aa)) form the CARD domain. The segment at 10-77 (KYIRYNHSKF…WVEVFIRALR (68 aa)) is required for interaction with NLRX1. A lipid anchor (S-palmitoyl cysteine) is attached at cysteine 79. Disordered regions lie at residues 123 to 238 (FAAG…TNLS), 250 to 326 (TTLS…NIAP), and 350 to 401 (ASAS…SKPG). Residues 143–147 (PVQDT) are interaction with TRAF2. 6 positions are modified to phosphoserine: serine 152, serine 157, serine 172, serine 178, serine 186, and serine 220. Positions 153-158 (PVENSE) are interaction with TRAF6. Residue arginine 234 is modified to Asymmetric dimethylarginine. Low complexity-rich tracts occupy residues 250–266 (TTLS…KGAG) and 281–293 (VPTN…SVPS). A Phosphoserine modification is found at serine 256. Polar residues predominate over residues 300 to 325 (NTMSSKLPISTKSTAATPSTVPTNIA). Lysine 305 participates in a covalent cross-link: Glycyl lysine isopeptide (Lys-Gly) (interchain with G-Cter in ubiquitin). An interaction with DHX33 region spans residues 340 to 507 (PSKVTASVAK…MLYRSRHLAQ (168 aa)). Basic and acidic residues predominate over residues 359 to 368 (RNNKQAKETL). The segment covering 374 to 391 (VVTTGSSLTRPDISSRSL) has biased composition (polar residues). At serine 387 the chain carries Phosphoserine. Residues 419-422 (LAIS) carry the pLxIS motif motif. Residue serine 422 is modified to Phosphoserine; by TBK1. Residues 423–474 (PSTSLGSEPNHGPEENEYSSFRIQVDKSPSVDLLGSPEPLATQQSPEEEEPC) form a disordered region. Residues 435–440 (PEENEY) are interaction with TRAF6. Residues 483–500 (WLGATSALLAAFLAVMLY) traverse the membrane as a helical segment. Residues 501–507 (RSRHLAQ) are Mitochondrial intermembrane-facing.

Self-associates and polymerizes (via CARD domains) to form 400 nM long three-stranded helical filaments on mitochondria, filament nucleation requires interaction with RIGI whose CARD domains act as a template for filament assembly. Interacts with RIGI, IFIH1/MDA5, TRAF2, TRAF6 and C1QBP. May interact with FADD, RIPK1, CHUK and IKBKB. Interacts (when phosphorylated) with IRF3; following activation and phosphorylation on the pLxIS motif by TBK1, recruits IRF3. Interacts with NLRX1. Interaction with NLRX1 requires the CARD domain. Interacts with PSMA7. Interacts with TRAFD1. Interacts (via C-terminus) with PCBP2 in a complex containing MAVS/IPS1, PCBP2 and ITCH. Interacts with CYLD. Interacts with SRC. Interacts with DHX58/LGP2 and IKBKE. Interacts with STING1. Interacts with IFIT3 (via N-terminus). Interacts with TBK1 only in the presence of IFIT3. Interacts with TTLL12; the interaction prevents MAVS binding to TBK1 and IKBKE. Interacts with MUL1. Interacts with ANKRD17. Interacts with NDFIP1. Interacts with SMURF1; the interaction is mediated by NDFIP1 and leads to MAVS ubiquitination and degradation. Interacts with UBXN1; this interaction inhibits MAVS-mediated antiviral pathway. Interacts (via C-terminus) with GPATCH3; the interaction is markedly increased upon viral infection. Directly interacts (via CARD domain) with ATG5 and ATG12, either as ATG5 and ATG12 monomers or as ATG12-ATG5 conjugates. Interacts with DHX33 (via the helicase C-terminal domain). Interacts with DDX3X (via C-terminus); this interaction may occur rapidly, but transiently after viral infection. The interaction with DDX3X potentiates MAVS-mediated IFNB induction. Conversely inhibition of this interaction prevents MAVS-mediated IFNB induction. Transiently interacts with TRAF3 early during viral infection. Interacts with CLPB. Interacts with TRAF3IP3. Interacts with TOMM70; the interaction is enhanced by virus infection. Interacts with ZNFX1. Interacts with DHX15. Interacts with N4BP3; this interaction promotes the polyubiquitination of MAVS. Interacts with TAX1BP1; this interaction induces MAVS polyubiquitination. Interacts with NLRP3; promoting NLRP3 recruitment to mitochondria and activation of the NLRP3 inflammasome. Interacts with ECSIT; this interaction bridges RIGI to the MAVS complex at the mitochondrion. Interacts with UBL7; this interaction promotes MAVS 'Lys-27'-linked ubiquitination leading to type I interferon production. Interacts (via transmembrane domain) with SMIM30/MAVI1 (via transmembrane domain); the interaction disrupts MAVS interaction with RIGI and inhibits MAVS aggregation, resulting in the repression of type I interferon signaling and innate immune responses. Post-translationally, following activation, phosphorylated by TBK1 at Ser-422 in the pLxIS motif. The phosphorylated pLxIS motif constitutes an IRF3-binding motif, leading to recruitment of the transcription factor IRF3 to induce type-I interferons and other cytokines. In terms of processing, ubiquitinated. Undergoes 'Lys-48'-linked polyubiquitination catalyzed by ITCH; ITCH-dependent polyubiquitination is mediated by the interaction with PCBP2 and leads to MAVS/IPS1 proteasomal degradation. Ubiquitinated by RNF125, leading to its degradation by the proteasome. Undergoes 'Lys-48'-linked ubiquitination catalyzed by SMURF1. Undergoes 'Lys-48'-linked ubiquitination catalyzed by MARCHF5 at Lys-7, leading to proteasomal degradation. Ubiquitinated via 'Lys-63'-linked ubiquitination at Lys-10 by TRIM31, promoting MAVS polymerization and formation of three-stranded helical filaments on mitochondria. Undergoes 'Lys-63'-linked ubiquitination leading to enhanced interaction between MAVS and TRAF2. Undergoes 'Lys-27'-linked ubiquitination by UBE2N and TRIM21 leading to enhanced interaction between MAVS and TBK1. Deubiquitinated by USP10 leading to attenuation of RIGI-mediated MAVS aggregation and production of type I interferon. Undergoes 'Lys-48'-linked polyubiquitination catalyzed by RNF115 leading to its degradation. Proteolytically cleaved by apoptotic caspases during apoptosis, leading to its inactivation. Cleavage by CASP3 during virus-induced apoptosis inactivates it, preventing cytokine overproduction. Post-translationally, palmitoylated by ZHDDC4. Palmitoylation promotes MAVS stabilization and activation by inhibiting 'Lys-48'- but facilitating 'Lys-63'-linked ubiquitination.

Its subcellular location is the mitochondrion outer membrane. The protein resides in the mitochondrion. It is found in the peroxisome. In terms of biological role, adapter required for innate immune defense against viruses. Acts downstream of DHX33, RIGI and IFIH1/MDA5, which detect intracellular dsRNA produced during viral replication, to coordinate pathways leading to the activation of NF-kappa-B, IRF3 and IRF7, and to the subsequent induction of antiviral cytokines such as IFN-beta and RANTES (CCL5). Peroxisomal and mitochondrial MAVS act sequentially to create an antiviral cellular state. Upon viral infection, peroxisomal MAVS induces the rapid interferon-independent expression of defense factors that provide short-term protection, whereas mitochondrial MAVS activates an interferon-dependent signaling pathway with delayed kinetics, which amplifies and stabilizes the antiviral response. May activate the same pathways following detection of extracellular dsRNA by TLR3. May protect cells from apoptosis. Involved in NLRP3 inflammasome activation by mediating NLRP3 recruitment to mitochondria. The chain is Mitochondrial antiviral-signaling protein (Mavs) from Rattus norvegicus (Rat).